Consider the following 563-residue polypeptide: MSFQLDQSTSVIKTAPPGRLEFKNEPIDIASSNIQDLAKMQTLDGYYQQTSLQLPQSQQYHRMYENVYNNQQILYAQTQNFQYPSTLLTNGSLAQTEWRGQQMDTSAYSNTGYSRSSTSQQPQYTQQVTENERIVYKPVDMPSPVDSGIGGDISILNPKEEFFTSADGGSMLERSSERTLSHRDSPLVIPKLYNNLGFQYVLEAPISTSVRRDDDRMTYVNKGQFYTVSLEYTPDLNKCLKSQTVKSQLMVVFREDKTYEEEIKTWQSWHARQHVSKQRILEIDSKNSSGMIGQIEEIGNNAVQFYWNPSDPSGVRISIAVQCLSTDFSTQKGVKGLPLHVQIDTYDGENDKVPFHRGYCQIKVFCDKGAERKLRDEDKRAQKRKVQEYTAGALPGGRKKSDGEYHDQCERSEFYHMRELDKPAALFIAPEEFEPRYVDSTSLSFDMSEIEPIPTKRPRTSERIMLYVRKRDEQIYQPLHVVPASLSGLALAIANKFGADPDKMSGVYKRCAKGITVKVDDEMLRLYCNEDTFIIDVEHATDGSTAATLIEVAPTNPNSYSNS.

The Grh/CP2 DB domain occupies 194–428 (NNLGFQYVLE…ELDKPAALFI (235 aa)). Interaction with DNA stretches follow at residues 326 to 335 (TDFSTQKGVK) and 372 to 375 (RKLR). A disordered region spans residues 377-405 (EDKRAQKRKVQEYTAGALPGGRKKSDGEY).

Belongs to the grh/CP2 family. Grainyhead subfamily.

The protein resides in the nucleus. Its function is as follows. Probable transcription factor. Binds a motif with the core sequence 5'-C[ACT][TG]G-3' in regulatory elements of target genes. Many putative target genes show oscillating expression levels, perhaps as a result of rhythmic variation in accumulation of grh-1. Plays a role in proper cuticle formation and/or barrier function and is required repetitively during development, for successful completion of each molt. Involved in modulating lifespan. Plays a role in defense response to bacteria. May act upstream of the p38 MAP kinase / pmk-1 pathway. May act downstream of the insulin/IGF-1 receptor signaling (IIS) pathway. The polypeptide is Grainyhead-like protein 1 homolog (Caenorhabditis elegans).